We begin with the raw amino-acid sequence, 120 residues long: UPF0231 protein YacL (120 aa).

This sequence belongs to the UPF0231 family.

This is UPF0231 protein YacL from Salmonella agona (strain SL483).